Reading from the N-terminus, the 184-residue chain is Large ribosomal subunit protein uL6 (184 aa).

It belongs to the universal ribosomal protein uL6 family. As to quaternary structure, part of the 50S ribosomal subunit.

This protein binds to the 23S rRNA, and is important in its secondary structure. It is located near the subunit interface in the base of the L7/L12 stalk, and near the tRNA binding site of the peptidyltransferase center. In Pyrococcus furiosus (strain ATCC 43587 / DSM 3638 / JCM 8422 / Vc1), this protein is Large ribosomal subunit protein uL6.